Here is a 468-residue protein sequence, read N- to C-terminus: UDP-N-acetylmuramate--L-alanine ligase (468 aa).

117–123 (GTHGKTT) contributes to the ATP binding site.

The protein belongs to the MurCDEF family.

It is found in the cytoplasm. The catalysed reaction is UDP-N-acetyl-alpha-D-muramate + L-alanine + ATP = UDP-N-acetyl-alpha-D-muramoyl-L-alanine + ADP + phosphate + H(+). Its pathway is cell wall biogenesis; peptidoglycan biosynthesis. Cell wall formation. The chain is UDP-N-acetylmuramate--L-alanine ligase from Maricaulis maris (strain MCS10) (Caulobacter maris).